A 132-amino-acid polypeptide reads, in one-letter code: Aspartate 1-decarboxylase (132 aa).

Catalysis depends on Ser25, which acts as the Schiff-base intermediate with substrate; via pyruvic acid. Ser25 carries the post-translational modification Pyruvic acid (Ser). Thr57 contributes to the substrate binding site. The active-site Proton donor is the Tyr58. 73-75 (GAA) lines the substrate pocket.

The protein belongs to the PanD family. In terms of assembly, heterooctamer of four alpha and four beta subunits. The cofactor is pyruvate. In terms of processing, is synthesized initially as an inactive proenzyme, which is activated by self-cleavage at a specific serine bond to produce a beta-subunit with a hydroxyl group at its C-terminus and an alpha-subunit with a pyruvoyl group at its N-terminus.

It localises to the cytoplasm. The enzyme catalyses L-aspartate + H(+) = beta-alanine + CO2. The protein operates within cofactor biosynthesis; (R)-pantothenate biosynthesis; beta-alanine from L-aspartate: step 1/1. Functionally, catalyzes the pyruvoyl-dependent decarboxylation of aspartate to produce beta-alanine. The chain is Aspartate 1-decarboxylase from Geotalea uraniireducens (strain Rf4) (Geobacter uraniireducens).